The sequence spans 577 residues: MNIQTLLNQRIQAAMVAAGASDTAQALVRQSAKVQFGDYQANGIMGAAKALKMNPCDFAQATLDKLDLSDLAEKVEIAGPGFINIFLKNVWLSKELTQLRTSERLDVNPVDAPETVVVDYSSPNLAKEMHVGHLRSTVIGDAVVRTLEFFGHHVVRQNHVGDWGTQFGMLLAYMERLRSENATISMALSDLETFYRAAKTCFDEDEAFATRSRELVVALQSGDEECLALWDEFINISLTHCEETYKMLGVSLERQHVMPESAYNDDLANVVNELKEQGLLQESNGAQCVFMEEFANKEGEITPIIVQKTGGGFLYATTDLAAVRFRQHTLNANRVLYFVDARQSLHFQQIFTLSRKAGFVKPETQLEHMPFGTVMGSDGKPFKTRSGGVAKLSSLLEEAQERAYQLVASKNPEMDEEELRNIGRVVGIASVKYADLSKNRTSDYVFNWDSMLSFEGNTAPYLLYAYSRVASIVKRSEIDVVNLTGEISIDEPQERALAVKLCQFEEAIQQVANDGMPHFLCAYLYDLAGTFMTFYEACPILNAEDEVKHSRLQLALNTASTLKLGLSLLGIETLERM.

A 'HIGH' region motif is present at residues 123-133; it reads PNLAKEMHVGH.

The protein belongs to the class-I aminoacyl-tRNA synthetase family. Monomer.

Its subcellular location is the cytoplasm. The enzyme catalyses tRNA(Arg) + L-arginine + ATP = L-arginyl-tRNA(Arg) + AMP + diphosphate. The protein is Arginine--tRNA ligase of Marinomonas sp. (strain MWYL1).